Here is a 484-residue protein sequence, read N- to C-terminus: tRNA sulfurtransferase (484 aa).

A THUMP domain is found at 61 to 166 (PHLIELLQCI…DKLLFIQARH (106 aa)). ATP is bound by residues 183-184 (LI), Lys-265, Gly-287, and Gln-296. Cysteines 344 and 456 form a disulfide. One can recognise a Rhodanese domain in the interval 404–483 (LGENDVILDI…FNNVQVFVKA (80 aa)). The active-site Cysteine persulfide intermediate is Cys-456.

The protein belongs to the ThiI family.

It is found in the cytoplasm. The catalysed reaction is [ThiI sulfur-carrier protein]-S-sulfanyl-L-cysteine + a uridine in tRNA + 2 reduced [2Fe-2S]-[ferredoxin] + ATP + H(+) = [ThiI sulfur-carrier protein]-L-cysteine + a 4-thiouridine in tRNA + 2 oxidized [2Fe-2S]-[ferredoxin] + AMP + diphosphate. It carries out the reaction [ThiS sulfur-carrier protein]-C-terminal Gly-Gly-AMP + S-sulfanyl-L-cysteinyl-[cysteine desulfurase] + AH2 = [ThiS sulfur-carrier protein]-C-terminal-Gly-aminoethanethioate + L-cysteinyl-[cysteine desulfurase] + A + AMP + 2 H(+). Its pathway is cofactor biosynthesis; thiamine diphosphate biosynthesis. In terms of biological role, catalyzes the ATP-dependent transfer of a sulfur to tRNA to produce 4-thiouridine in position 8 of tRNAs, which functions as a near-UV photosensor. Also catalyzes the transfer of sulfur to the sulfur carrier protein ThiS, forming ThiS-thiocarboxylate. This is a step in the synthesis of thiazole, in the thiamine biosynthesis pathway. The sulfur is donated as persulfide by IscS. The sequence is that of tRNA sulfurtransferase from Actinobacillus succinogenes (strain ATCC 55618 / DSM 22257 / CCUG 43843 / 130Z).